A 198-amino-acid chain; its full sequence is Transcription factor FapR (198 aa).

A MaoC-like domain is found at 102–168 (TRIARGHHLF…GRTVVDVNSY (67 aa)).

Belongs to the FapR family.

Transcriptional factor involved in regulation of membrane lipid biosynthesis by repressing genes involved in fatty acid and phospholipid metabolism. In Geobacillus thermodenitrificans (strain NG80-2), this protein is Transcription factor FapR.